A 461-amino-acid polypeptide reads, in one-letter code: Argininosuccinate lyase (461 aa).

Residues Ser-28, Asn-115, and Thr-160 each contribute to the 2-(N(omega)-L-arginino)succinate site. The Proton acceptor role is filled by His-161. Residue Ser-282 is the Proton donor of the active site. 2-(N(omega)-L-arginino)succinate contacts are provided by Asn-290, Tyr-322, Gln-327, and Lys-330.

The protein belongs to the lyase 1 family. Argininosuccinate lyase subfamily. As to quaternary structure, homotetramer.

It catalyses the reaction 2-(N(omega)-L-arginino)succinate = fumarate + L-arginine. It functions in the pathway amino-acid biosynthesis; L-arginine biosynthesis; L-arginine from L-ornithine and carbamoyl phosphate: step 3/3. The chain is Argininosuccinate lyase (arg7) from Schizosaccharomyces pombe (strain 972 / ATCC 24843) (Fission yeast).